A 119-amino-acid polypeptide reads, in one-letter code: Ribosome-binding factor A (119 aa).

This sequence belongs to the RbfA family. As to quaternary structure, monomer. Binds 30S ribosomal subunits, but not 50S ribosomal subunits or 70S ribosomes.

The protein resides in the cytoplasm. Its function is as follows. One of several proteins that assist in the late maturation steps of the functional core of the 30S ribosomal subunit. Associates with free 30S ribosomal subunits (but not with 30S subunits that are part of 70S ribosomes or polysomes). Required for efficient processing of 16S rRNA. May interact with the 5'-terminal helix region of 16S rRNA. The protein is Ribosome-binding factor A of Buchnera aphidicola subsp. Baizongia pistaciae (strain Bp).